A 269-amino-acid chain; its full sequence is Ubiquinone/menaquinone biosynthesis C-methyltransferase UbiE (269 aa).

Residues threonine 92, aspartate 113, and 141 to 142 (NA) each bind S-adenosyl-L-methionine.

It belongs to the class I-like SAM-binding methyltransferase superfamily. MenG/UbiE family.

The catalysed reaction is a 2-demethylmenaquinol + S-adenosyl-L-methionine = a menaquinol + S-adenosyl-L-homocysteine + H(+). It carries out the reaction a 2-methoxy-6-(all-trans-polyprenyl)benzene-1,4-diol + S-adenosyl-L-methionine = a 5-methoxy-2-methyl-3-(all-trans-polyprenyl)benzene-1,4-diol + S-adenosyl-L-homocysteine + H(+). It functions in the pathway quinol/quinone metabolism; menaquinone biosynthesis; menaquinol from 1,4-dihydroxy-2-naphthoate: step 2/2. The protein operates within cofactor biosynthesis; ubiquinone biosynthesis. Its function is as follows. Methyltransferase required for the conversion of demethylmenaquinol (DMKH2) to menaquinol (MKH2) and the conversion of 2-polyprenyl-6-methoxy-1,4-benzoquinol (DDMQH2) to 2-polyprenyl-3-methyl-6-methoxy-1,4-benzoquinol (DMQH2). The polypeptide is Ubiquinone/menaquinone biosynthesis C-methyltransferase UbiE (Brucella canis (strain ATCC 23365 / NCTC 10854 / RM-666)).